We begin with the raw amino-acid sequence, 456 residues long: UDP-N-acetylmuramate--L-alanine ligase (456 aa).

112–118 (GAHGKTS) contacts ATP.

It belongs to the MurCDEF family.

It is found in the cytoplasm. It carries out the reaction UDP-N-acetyl-alpha-D-muramate + L-alanine + ATP = UDP-N-acetyl-alpha-D-muramoyl-L-alanine + ADP + phosphate + H(+). Its pathway is cell wall biogenesis; peptidoglycan biosynthesis. Its function is as follows. Cell wall formation. This Desulforapulum autotrophicum (strain ATCC 43914 / DSM 3382 / VKM B-1955 / HRM2) (Desulfobacterium autotrophicum) protein is UDP-N-acetylmuramate--L-alanine ligase.